The chain runs to 256 residues: Hemolymph lipopolysaccharide-binding protein (256 aa).

The N-terminal stretch at 1–21 (MMNTRALLPLSVLLMATLCLC) is a signal peptide. A propeptide spanning residues 22-33 (ELPIPILQRFVR) is cleaved from the precursor. N-linked (GlcNAc...) asparagine glycosylation is present at Asn56. The C-type lectin domain occupies 146–256 (IICQQEGGHL…KLPFVCEVEL (111 aa)). 2 disulfide bridges follow: Cys148–Cys252 and Cys230–Cys244.

In terms of tissue distribution, hemolymph.

The protein resides in the secreted. Functionally, participates probably in the elimination of foreign substances invading the insect abdominal cavity, and in trapping intracellular symbionts, when they leak from the mycetomes into the hemolymph. In Periplaneta americana (American cockroach), this protein is Hemolymph lipopolysaccharide-binding protein.